Reading from the N-terminus, the 304-residue chain is D-alanine--D-alanine ligase (304 aa).

Residues 107 to 300 form the ATP-grasp domain; that stretch reads KRLWQGSGLP…FDELVARILG (194 aa). 134 to 186 is an ATP binding site; sequence VGYPVIVKPAREGSSLGMSRVEGPEELAEAYRVAAAYDDTVLAEAWVEGEEYT. Mg(2+)-binding residues include D254, E267, and N269.

It belongs to the D-alanine--D-alanine ligase family. Mg(2+) serves as cofactor. It depends on Mn(2+) as a cofactor.

The protein resides in the cytoplasm. The catalysed reaction is 2 D-alanine + ATP = D-alanyl-D-alanine + ADP + phosphate + H(+). Its pathway is cell wall biogenesis; peptidoglycan biosynthesis. Functionally, cell wall formation. The sequence is that of D-alanine--D-alanine ligase from Halorhodospira halophila (strain DSM 244 / SL1) (Ectothiorhodospira halophila (strain DSM 244 / SL1)).